Consider the following 77-residue polypeptide: Adipokinetic prohormone type 3 (77 aa).

An N-terminal signal peptide occupies residues 1–22 (MQVRAVLVLAVVALVAVATSRA). Gln-23 is subject to Pyrrolidone carboxylic acid. Position 30 is a tryptophan amide (Trp-30).

Belongs to the AKH/HRTH/RPCH family.

It is found in the secreted. In terms of biological role, this hormone, released from cells in the corpora cardiaca, causes release of diglycerides from the fat body and stimulation of muscles to use these diglycerides as an energy source during energy-demanding processes. The sequence is that of Adipokinetic prohormone type 3 from Locusta migratoria (Migratory locust).